We begin with the raw amino-acid sequence, 358 residues long: Sulfoquinovosyl glycerol transport ATP-binding protein SmoE (358 aa).

One can recognise an ABC transporter domain in the interval 4–234; it reads VSLRKLDKSY…PESVFVGGFV (231 aa). Residue 36–43 coordinates ATP; that stretch reads GPSGCGKS.

The protein belongs to the ABC transporter superfamily. The complex is probably composed of two ATP-binding proteins (SmoE), two transmembrane proteins (SmoG and SmoH) and a solute-binding protein (SmoF).

The protein localises to the cell inner membrane. In terms of biological role, part of the ABC transporter complex SmoEFGH involved in sulfoquinovosyl glycerol (SQGro) uptake. Responsible for energy coupling to the transport system. The protein is Sulfoquinovosyl glycerol transport ATP-binding protein SmoE of Agrobacterium fabrum (strain C58 / ATCC 33970) (Agrobacterium tumefaciens (strain C58)).